The chain runs to 1950 residues: E3 ubiquitin-protein ligase UBR1 (1950 aa).

Residues His118, Cys123, Cys136, Cys139, Cys148, Cys151, His157, His160, His161, Cys175, Cys177, and Cys189 each coordinate Zn(2+). The UBR-type zinc-finger motif lies at 121–194; it reads RNCGRKFKIG…SPLHCKAEEQ (74 aa). Ser296 and Ser300 each carry phosphoserine. Residues 678 to 681 form a ubiquitin-binding loop region; that stretch reads HVLH. Residue Asp952 participates in Zn(2+) binding. The segment at 1165 to 1200 is UBC2-binding region (U2BR); sequence KERKRRLAKKHQARLLAKFNNQQTKFMKEHESEFDE. The Zn(2+) site is built by Cys1220, Cys1223, Cys1295, His1297, His1300, Cys1303, Cys1320, and Cys1323. Residues 1220–1324 form an RING-type; atypical zinc finger; sequence CALCQDSSST…SNAFICPLCQ (105 aa). The tract at residues 1333 to 1665 is cap helical domain (CHD); that stretch reads LCQTSKANTG…YEYCGIIKLI (333 aa). 6 residues coordinate Zn(2+): Cys1703, Cys1706, His1722, Cys1727, His1763, and Asp1775. Disordered regions lie at residues 1826 to 1846 and 1893 to 1950; these read RPRRIPPTDEDDEDMEEGEDG and TLQP…REIW. Composition is skewed to acidic residues over residues 1833–1846 and 1934–1950; these read TDEDDEDMEEGEDG and DEDDSDDNDDSDEREIW. The residue at position 1938 (Ser1938) is a Phosphoserine.

The protein belongs to the E3 ubiquitin-protein ligase UBR1-like family. Interacts with UBC2. Interacts with RPN2, RPT1 and RPT6 from the 26S proteasome.

The catalysed reaction is S-ubiquitinyl-[E2 ubiquitin-conjugating enzyme]-L-cysteine + [acceptor protein]-L-lysine = [E2 ubiquitin-conjugating enzyme]-L-cysteine + N(6)-ubiquitinyl-[acceptor protein]-L-lysine.. It participates in protein modification; protein ubiquitination. Ubiquitin ligase protein which is a component of the N-end rule pathway. Recognizes and binds to proteins bearing specific N-terminal residues that are destabilizing according to the N-end rule, leading to their ubiquitination and subsequent degradation. Recognizes both type-1 and type-2 N-degrons, containing positively charged amino acids (Arg, Lys and His) and bulky and hydrophobic amino acids, respectively. In Saccharomyces cerevisiae (strain ATCC 204508 / S288c) (Baker's yeast), this protein is E3 ubiquitin-protein ligase UBR1.